We begin with the raw amino-acid sequence, 125 residues long: Protein ApaG (125 aa).

The ApaG domain occupies 1–125; sequence MIDSPRVCVQ…FRLAVPTFIH (125 aa).

The protein is Protein ApaG of Enterobacter sp. (strain 638).